Consider the following 582-residue polypeptide: Arginine--tRNA ligase (582 aa).

Positions 127 to 137 match the 'HIGH' region motif; that stretch reads PNLAKEMHVGH.

This sequence belongs to the class-I aminoacyl-tRNA synthetase family. Monomer.

It localises to the cytoplasm. The catalysed reaction is tRNA(Arg) + L-arginine + ATP = L-arginyl-tRNA(Arg) + AMP + diphosphate. This chain is Arginine--tRNA ligase, found in Psychromonas ingrahamii (strain DSM 17664 / CCUG 51855 / 37).